A 146-amino-acid polypeptide reads, in one-letter code: uncharacterized protein (146 aa).

Helical transmembrane passes span 89-111 and 121-143; these read AIEM…LLLY and IGCG…YSVV.

The protein localises to the cell membrane. This is an uncharacterized protein from Archaeoglobus fulgidus (strain ATCC 49558 / DSM 4304 / JCM 9628 / NBRC 100126 / VC-16).